The sequence spans 809 residues: Sodium/hydrogen exchanger 2 (809 aa).

7 helical membrane passes run 107–127 (IVPE…IIFG), 138–158 (TDVF…YFMP), 169–189 (IFWY…VSLF), 209–229 (LFGS…FENI), 237–257 (ILVF…YNLF), 278–298 (FFVV…IAAF), and 308–328 (VIEP…AEMF). Asn350 is a glycosylation site (N-linked (GlcNAc...) asparagine). The next 4 helical transmembrane spans lie at 361–381 (YFMK…MGVS), 392–412 (AFVC…VFVL), 430–450 (FIIA…FLLP), and 459–479 (LFIT…GITI). Basic and acidic residues-rich tracts occupy residues 648 to 660 (IRKD…ERRA) and 793 to 809 (RASE…SDKP). 2 disordered regions span residues 648-700 (IRKD…EADA) and 734-809 (EVDA…SDKP).

The protein belongs to the monovalent cation:proton antiporter 1 (CPA1) transporter (TC 2.A.36) family. As to quaternary structure, interacts with CHP1 and CHP2. In terms of tissue distribution, high levels in intestine and kidney. Strongly expressed in gastric epithelial cells, with particularly high expression levels in mucous cells.

It localises to the apical cell membrane. It carries out the reaction Na(+)(in) + H(+)(out) = Na(+)(out) + H(+)(in). Its function is as follows. Plasma membrane Na(+)/H(+) antiporter. Mediates the electroneutral exchange of intracellular H(+) ions for extracellular Na(+). Major apical Na(+)/H(+) exchanger in the base of the colonic crypt. Controls in the colonic crypt intracellular pH (pHi) to direct colonic epithelial cell differentiation into the absorptive enterocyte lineage at the expense of the secretory lineage. This chain is Sodium/hydrogen exchanger 2 (SLC9A2), found in Oryctolagus cuniculus (Rabbit).